The following is a 209-amino-acid chain: ATP-dependent Clp protease proteolytic subunit 2 (209 aa).

S106 acts as the Nucleophile in catalysis. The active site involves H131.

Belongs to the peptidase S14 family. In terms of assembly, fourteen ClpP subunits assemble into 2 heptameric rings which stack back to back to give a disk-like structure with a central cavity, resembling the structure of eukaryotic proteasomes.

The protein resides in the cytoplasm. It carries out the reaction Hydrolysis of proteins to small peptides in the presence of ATP and magnesium. alpha-casein is the usual test substrate. In the absence of ATP, only oligopeptides shorter than five residues are hydrolyzed (such as succinyl-Leu-Tyr-|-NHMec, and Leu-Tyr-Leu-|-Tyr-Trp, in which cleavage of the -Tyr-|-Leu- and -Tyr-|-Trp bonds also occurs).. Cleaves peptides in various proteins in a process that requires ATP hydrolysis. Has a chymotrypsin-like activity. Plays a major role in the degradation of misfolded proteins. The polypeptide is ATP-dependent Clp protease proteolytic subunit 2 (Rhizobium etli (strain ATCC 51251 / DSM 11541 / JCM 21823 / NBRC 15573 / CFN 42)).